A 369-amino-acid polypeptide reads, in one-letter code: Phospho-N-acetylmuramoyl-pentapeptide-transferase (369 aa).

A run of 10 helical transmembrane segments spans residues 3–23, 53–73, 81–101, 118–138, 162–182, 198–218, 240–260, 267–287, 290–310, and 347–367; these read ALLG…PLFI, GGIV…LLTW, VTPS…VGFL, WQKI…AITL, FMAL…CLIV, LAAG…FWQF, PLDL…FLWW, IFMG…LAIL, TELL…SVVL, and FWII…LEWI.

It belongs to the glycosyltransferase 4 family. MraY subfamily. Mg(2+) serves as cofactor.

The protein localises to the cell membrane. The enzyme catalyses UDP-N-acetyl-alpha-D-muramoyl-L-alanyl-gamma-D-glutamyl-meso-2,6-diaminopimeloyl-D-alanyl-D-alanine + di-trans,octa-cis-undecaprenyl phosphate = di-trans,octa-cis-undecaprenyl diphospho-N-acetyl-alpha-D-muramoyl-L-alanyl-D-glutamyl-meso-2,6-diaminopimeloyl-D-alanyl-D-alanine + UMP. Its pathway is cell wall biogenesis; peptidoglycan biosynthesis. In terms of biological role, catalyzes the initial step of the lipid cycle reactions in the biosynthesis of the cell wall peptidoglycan: transfers peptidoglycan precursor phospho-MurNAc-pentapeptide from UDP-MurNAc-pentapeptide onto the lipid carrier undecaprenyl phosphate, yielding undecaprenyl-pyrophosphoryl-MurNAc-pentapeptide, known as lipid I. The protein is Phospho-N-acetylmuramoyl-pentapeptide-transferase of Clavibacter sepedonicus (Clavibacter michiganensis subsp. sepedonicus).